Consider the following 2238-residue polypeptide: MTPEAKRKKNQKKKLRQKQKKAAEKATDLPATDQSVNISGAEDALTSNSNVSTPDYTSNFEISVTSTQEVNVDSQLSQNQNSDNFINEQKENDPQSETVFDSHEDIESEMKDNYHNDIKNTTEAITFDTAQNIIGGSIDSSNTVKSEDKINESSSKISDPDCQEDILKLELEGQPLESSCNDDKESVVEGNNENDNNDDLVNDHPTAEDGSDFFDNLASNNTEVELSSTQNSNLLTENRLESEEFGKPEKLDYPKELSYSEEVDLVEEVDHVEEVDHVEEVDHSEEEDLVEEVDHVEEVDHSEEVDHSEEVDHVEEVDHSEELLTSSVSTQTGMAENTIRHVDESNLGQQKMEERNINSDTHKDATARVSDFHANDEFETGPAAQINSLIEMNDDEQSVNDLQDESSLLQEETTFSQIPKNEVNTENQENIGSESVSKINVANENSMESAIEDLFPSMHNTNEQNPWELPQQGENVVENEVSHEENQRITETTKDDSDNIDRILCDREDKKEDSFDDLFGNNEVGDDVPWLQESMKSEEGEKHHQSSTAKEESPANVRTSDNTASQDNDTLPSESVKSNQQQNVESSSDRQQTSADTVKKFSFLEEDDDLLDDDDSFLESEEEIEELESNETVQINELTQEMSTSAESKKLNHNPYRPSSHSSINTQMDPKYNNYQTVPNSSTAPTGIVRPQQITTFLPTNNAQTNTPGTILSPIQTTNEKVKKLTEEKKKSDAYDFPINLVSSTVKKGHAKPVGVFTNQFSRNGSTPTTPKINPHSRNSSVNPAQIIPKNPYASIQQPNPVIAPTTNMINNPINMMPTARMRGNSAVSTTSGKSVGTSVATKQNPYSPQITKSPRASISQPAGIPNNSKYGPISPSTSQFNSLGQVLDSGLVHSSTTPMGSTLSPISTKLNANNQPSPQSKQYPGNSSYLPSQNDSRSKYAPAFSTGQYAGYSSHSKPAVNQPALPFPRKQSESAGDANPPINTVLPPGIRKTNVLLESQQNLRQNANYPTYAEHSHEQTNSYNVHGASNKKIVNNNALLVKQFPIFNWGSNNKVIYGIPLGQNDSVMMPTNSPLQNLRMIGAEILIKPTQLIKSFPGPLCGSKVKKSDVEQWLLTASKDADVDEEAALLLSLLKLKLSTTSTFKDMATLLYDTATLHEYLAQPLTSLNQAPNAFSLDPESQFRVLSFLQVGAHDDALRFSLEKKDYSISLLIGSLLGKDKWCEVVQRYLSEQFTAIANNSNLWAHLLPLIFQVFVGSSKTAVSRFYKNQEEANWAAENWRGIVAAVLINITDHSQPKQTASIQTPPAVVTEFLIEFGIFLKKLGMNLPASILFVIANVPLSNVPILPDSDVHFRSIGSTNNVLGAILSETYEYTISQDLKFKGYPATLPLKLFHAYCLQEEGLTSLAYKYVDYLSSATKSMTKKDAESLNLSHHLSILTNRLAGSSSSWLGKPKLSSVWGQIDKSFNKYIGGDDDLPKPATEKKVFDSYTPSSSTNSSMIDLSHSVSNFMPAQINQLSRNNLNSENKMSTVPDLTAFGEKNAFEPPTNTWTGMSLQGSPQRAVSNMKPPLSNRPNLRRIKTELPSGEDELLSMTVKQGKKSYAPDNLNRASNSSNETLKSSQSANNSVPYHQSTPNLIGMQSVEQKKSYYPSNQRAMRKSAMPTQPENLEISRNARSYEPHTKTKKVYKPNQTLEEEPPIQSYNDDVVSQNQFEEAPNLQNDQEKILQPTASPEGLSQTRISNYSPERPPLPVYSEDSKNMDPKNISDLVKEQQITDKSLEHELEQLPTENDADYKISNANEDNAINEEEREIGNGEVELNVDQSQSHLSASIPQTQNDRESTTVSISPGLGLEMDVDKEDSNAPAPKLFSEKPNPSPYAPPTVGKKGTKKTSYMPKGKTESFIAEPEISSYESSPLDMYAYSGYRPQEKEKSTSSIVEESSQISNEDAPDKSSIAARQAVELKQDEVSKKPITTKLSTPKSLPIPPSPFANPLANNNTTGVLPTENFEPVIKVSRNTTARAFTPVPPASDQYDDVVEEDSDDSDDSEDDSPMQSNNSNNGNSERNENKQNDNYSDDEMPTKKKSHDNNDAGSGWFGWLKKDTNEKKAVKAKLGNQNSFYYDEQLKRWVNKNASEEDKQQLATPAPPPPIVKRKDTEPKTKPRSISGVTPHLDTGIGSSIPPISGNAPPKPKSGPSLAAKTNGLDDLLNLTAAAPATSTRRKKKGGRGYVNVMENL.

The segment covering 1–20 (MTPEAKRKKNQKKKLRQKQK) has biased composition (basic residues). 15 disordered regions span residues 1–115 (MTPE…DNYH), 135–161 (GGSIDSSNTVKSEDKINESSSKISDPD), 173–255 (GQPL…DYPK), 297–363 (EEVD…DTHK), 394–596 (DDEQ…TSAD), 642–666 (MSTSAESKKLNHNPYRPSSHSSINT), 757–787 (FTNQFSRNGSTPTTPKINPHSRNSSVNPAQI), 824–878 (GNSA…SPST), 892–988 (LVHS…TVLP), 1547–1577 (PPTNTWTGMSLQGSPQRAVSNMKPPLSNRPN), 1600–1703 (GKKS…PPIQ), 1732–1766 (TASPEGLSQTRISNYSPERPPLPVYSEDSKNMDPK), 1809–1901 (NEEE…PKGK), 1928–2102 (RPQE…GWLK), and 2133–2238 (KNAS…MENL). Residues 45 to 87 (LTSNSNVSTPDYTSNFEISVTSTQEVNVDSQLSQNQNSDNFIN) are compositionally biased toward polar residues. Residues 100 to 115 (FDSHEDIESEMKDNYH) show a composition bias toward basic and acidic residues. Composition is skewed to polar residues over residues 135–144 (GGSIDSSNTV) and 217–236 (LASNNTEVELSSTQNSNLLT). Composition is skewed to basic and acidic residues over residues 238–255 (NRLESEEFGKPEKLDYPK) and 297–322 (EEVDHSEEVDHSEEVDHVEEVDHSEE). A compositionally biased stretch (polar residues) spans 325–335 (TSSVSTQTGMA). Positions 351-363 (KMEERNINSDTHK) are enriched in basic and acidic residues. Residues 394–404 (DDEQSVNDLQD) are compositionally biased toward acidic residues. The segment covering 405–448 (ESSLLQEETTFSQIPKNEVNTENQENIGSESVSKINVANENSME) has biased composition (polar residues). 2 stretches are compositionally biased toward basic and acidic residues: residues 480-513 (EVSHEENQRITETTKDDSDNIDRILCDREDKKED) and 535-553 (MKSEEGEKHHQSSTAKEES). 3 stretches are compositionally biased toward polar residues: residues 556–596 (NVRT…TSAD), 657–666 (RPSSHSSINT), and 757–784 (FTNQFSRNGSTPTTPKINPHSRNSSVNP). Positions 824–842 (GNSAVSTTSGKSVGTSVAT) are enriched in low complexity. Composition is skewed to polar residues over residues 843-878 (KQNPYSPQITKSPRASISQPAGIPNNSKYGPISPST), 893-936 (VHSS…SQND), 946-957 (STGQYAGYSSHS), 1548-1565 (PTNTWTGMSLQGSPQRAV), 1610-1638 (NRASNSSNETLKSSQSANNSVPYHQSTPN), 1732-1747 (TASPEGLSQTRISNYS), 1824-1849 (VDQSQSHLSASIPQTQNDRESTTVSI), and 1936-1948 (TSSIVEESSQISN). Positions 1963–1972 (VELKQDEVSK) are enriched in basic and acidic residues. The segment covering 2034–2053 (QYDDVVEEDSDDSDDSEDDS) has biased composition (acidic residues).

The protein belongs to the SEC16 family.

Its subcellular location is the endoplasmic reticulum membrane. Involved in the initiation of assembly of the COPII coat required for the formation of transport vesicles from the endoplasmic reticulum (ER) and the selection of cargo molecules. Also involved in autophagy. This chain is COPII coat assembly protein SEC16 (SEC16), found in Candida glabrata (strain ATCC 2001 / BCRC 20586 / JCM 3761 / NBRC 0622 / NRRL Y-65 / CBS 138) (Yeast).